The following is a 469-amino-acid chain: DENN domain-containing protein 2D (469 aa).

The tract at residues 17 to 44 (LPRLRAGQSQNNPGEAVTEPERIQEHSP) is disordered. Residues 55–204 (EYLLVVSLKK…AFPAPGKTVT (150 aa)) enclose the uDENN domain. A cDENN domain is found at 226–359 (HLEHVDFSVL…LQDDILDSLG (134 aa)). The dDENN domain occupies 361–445 (GINELKTSEQ…QEAEKSRNPP (85 aa)).

The protein localises to the cytoplasm. Its function is as follows. Guanine nucleotide exchange factor (GEF) which may activate RAB9A and RAB9B. Promotes the exchange of GDP to GTP, converting inactive GDP-bound Rab proteins into their active GTP-bound form. In Mus musculus (Mouse), this protein is DENN domain-containing protein 2D (Dennd2d).